The following is a 153-amino-acid chain: Cytochrome c-type biogenesis protein CcmE (153 aa).

At 1–7 (MTRKKRR) the chain is on the cytoplasmic side. Residues 8–28 (LYFVVLGMLALFAAAGLTLTA) form a helical; Signal-anchor for type II membrane protein membrane-spanning segment. Residues 29 to 153 (FQDNLVFFYS…PPTAAAAPAP (125 aa)) lie on the Periplasmic side of the membrane. 2 residues coordinate heme: H121 and Y125. Positions 132 to 153 (ESLKASGKWQHGPPTAAAAPAP) are disordered. Positions 144–153 (PPTAAAAPAP) are enriched in low complexity.

Belongs to the CcmE/CycJ family.

The protein localises to the cell inner membrane. In terms of biological role, heme chaperone required for the biogenesis of c-type cytochromes. Transiently binds heme delivered by CcmC and transfers the heme to apo-cytochromes in a process facilitated by CcmF and CcmH. This chain is Cytochrome c-type biogenesis protein CcmE, found in Rhodospirillum rubrum (strain ATCC 11170 / ATH 1.1.1 / DSM 467 / LMG 4362 / NCIMB 8255 / S1).